Reading from the N-terminus, the 517-residue chain is Acetylcholine receptor subunit delta (517 aa).

A signal peptide spans 1 to 21; it reads MAGPVPTLGLLAALVVCGSWG. Topologically, residues 22-245 are extracellular; it reads LNEEQRLIQH…VTFYLIIRRK (224 aa). Residues Asn-97, Asn-164, and Asn-190 are each glycosylated (N-linked (GlcNAc...) asparagine). Cys-151 and Cys-165 are disulfide-bonded. Helical transmembrane passes span 246–270, 278–296, and 312–333; these read PLFY…VFYL, TSVA…LLIS, and FLLF…VLNI. At 334–471 the chain is on the cytoplasmic side; sequence HFRTPSTHVL…WNQVARTVDR (138 aa). Residue Tyr-390 is modified to Phosphotyrosine; by Tyr-kinases. A helical transmembrane segment spans residues 472-490; sequence LCLFVVTPVMVVGTAWIFL.

Belongs to the ligand-gated ion channel (TC 1.A.9) family. Acetylcholine receptor (TC 1.A.9.1) subfamily. Delta/CHRND sub-subfamily. Pentamer of two alpha chains, and one each of the beta, delta, and gamma (in immature muscle) or epsilon (in mature muscle) chains. The muscle heteropentamer composed of alpha-1, beta-1, delta, epsilon subunits interacts with the alpha-conotoxin ImII.

It localises to the postsynaptic cell membrane. Its subcellular location is the cell membrane. The catalysed reaction is K(+)(in) = K(+)(out). It carries out the reaction Na(+)(in) = Na(+)(out). In terms of biological role, after binding acetylcholine, the AChR responds by an extensive change in conformation that affects all subunits and leads to opening of an ion-conducting channel across the plasma membrane. This Rattus norvegicus (Rat) protein is Acetylcholine receptor subunit delta (Chrnd).